A 205-amino-acid chain; its full sequence is Ribosomal RNA large subunit methyltransferase E (205 aa).

Residues Gly-60, Trp-62, Asp-80, Asp-96, and Asp-121 each coordinate S-adenosyl-L-methionine. The active-site Proton acceptor is the Lys-161.

The protein belongs to the class I-like SAM-binding methyltransferase superfamily. RNA methyltransferase RlmE family.

The protein resides in the cytoplasm. The catalysed reaction is uridine(2552) in 23S rRNA + S-adenosyl-L-methionine = 2'-O-methyluridine(2552) in 23S rRNA + S-adenosyl-L-homocysteine + H(+). Its function is as follows. Specifically methylates the uridine in position 2552 of 23S rRNA at the 2'-O position of the ribose in the fully assembled 50S ribosomal subunit. This is Ribosomal RNA large subunit methyltransferase E from Chromobacterium violaceum (strain ATCC 12472 / DSM 30191 / JCM 1249 / CCUG 213 / NBRC 12614 / NCIMB 9131 / NCTC 9757 / MK).